The primary structure comprises 112 residues: UPF0060 membrane protein SAV_4756 (112 aa).

4 helical membrane passes run 8–28, 33–53, 62–82, and 91–111; these read ALFV…WQGV, GWLW…VATL, ILAA…MVAD, and VTGA…PRGG.

Belongs to the UPF0060 family.

It is found in the cell membrane. This Streptomyces avermitilis (strain ATCC 31267 / DSM 46492 / JCM 5070 / NBRC 14893 / NCIMB 12804 / NRRL 8165 / MA-4680) protein is UPF0060 membrane protein SAV_4756.